We begin with the raw amino-acid sequence, 861 residues long: DNA mismatch repair protein MutS (861 aa).

618-625 (GPNMGGKS) contacts ATP.

Belongs to the DNA mismatch repair MutS family.

In terms of biological role, this protein is involved in the repair of mismatches in DNA. It is possible that it carries out the mismatch recognition step. This protein has a weak ATPase activity. This Shewanella sp. (strain MR-7) protein is DNA mismatch repair protein MutS.